The following is a 353-amino-acid chain: DNA integrity scanning protein DisA (353 aa).

The 139-residue stretch at 6-144 (DKELMNILKI…GGIKYVLRDS (139 aa)) folds into the DAC domain. ATP is bound by residues Gly-73, Leu-91, and 104–108 (TRHRT).

The protein belongs to the DisA family. Homooctamer. Mg(2+) is required as a cofactor.

It carries out the reaction 2 ATP = 3',3'-c-di-AMP + 2 diphosphate. Its function is as follows. Participates in a DNA-damage check-point that is active prior to asymmetric division when DNA is damaged. DisA forms globular foci that rapidly scan along the chromosomes during sporulation, searching for lesions. When a lesion is present, DisA pauses at the lesion site. This triggers a cellular response that culminates in a temporary block in sporulation initiation. Also has diadenylate cyclase activity, catalyzing the condensation of 2 ATP molecules into cyclic di-AMP (c-di-AMP). c-di-AMP acts as a signaling molecule that couples DNA integrity with progression of sporulation. The rise in c-di-AMP level generated by DisA while scanning the chromosome, operates as a positive signal that advances sporulation; upon encountering a lesion, the DisA focus arrests at the damaged site and halts c-di-AMP synthesis. This is DNA integrity scanning protein DisA from Clostridium botulinum (strain Kyoto / Type A2).